A 187-amino-acid chain; its full sequence is Ribosome maturation factor RimM (187 aa).

The PRC barrel domain maps to 91–183 (DDGFYDHELE…ILVLTPPEGL (93 aa)).

Belongs to the RimM family. Binds ribosomal protein uS19.

The protein localises to the cytoplasm. An accessory protein needed during the final step in the assembly of 30S ribosomal subunit, possibly for assembly of the head region. Essential for efficient processing of 16S rRNA. May be needed both before and after RbfA during the maturation of 16S rRNA. It has affinity for free ribosomal 30S subunits but not for 70S ribosomes. The polypeptide is Ribosome maturation factor RimM (Corynebacterium jeikeium (strain K411)).